Here is a 78-residue protein sequence, read N- to C-terminus: Large ribosomal subunit protein bL28 (78 aa).

A disordered region spans residues 1–23; the sequence is MSRKCQITGKKANNAMAVSHSHR.

This sequence belongs to the bacterial ribosomal protein bL28 family.

This is Large ribosomal subunit protein bL28 from Picosynechococcus sp. (strain ATCC 27264 / PCC 7002 / PR-6) (Agmenellum quadruplicatum).